A 367-amino-acid chain; its full sequence is Anhydro-N-acetylmuramic acid kinase (367 aa).

10–17 (GTSLDGVD) provides a ligand contact to ATP.

The protein belongs to the anhydro-N-acetylmuramic acid kinase family.

It catalyses the reaction 1,6-anhydro-N-acetyl-beta-muramate + ATP + H2O = N-acetyl-D-muramate 6-phosphate + ADP + H(+). Its pathway is amino-sugar metabolism; 1,6-anhydro-N-acetylmuramate degradation. It participates in cell wall biogenesis; peptidoglycan recycling. Functionally, catalyzes the specific phosphorylation of 1,6-anhydro-N-acetylmuramic acid (anhMurNAc) with the simultaneous cleavage of the 1,6-anhydro ring, generating MurNAc-6-P. Is required for the utilization of anhMurNAc either imported from the medium or derived from its own cell wall murein, and thus plays a role in cell wall recycling. This is Anhydro-N-acetylmuramic acid kinase from Aliivibrio fischeri (strain ATCC 700601 / ES114) (Vibrio fischeri).